The following is a 505-amino-acid chain: Peroxisome proliferator-activated receptor gamma (505 aa).

A glycan (O-linked (GlcNAc) threonine) is linked at T84. S112 carries the post-translational modification Phosphoserine. The segment at residues A136–F210 is a DNA-binding region (nuclear receptor). 2 consecutive NR C4-type zinc fingers follow at residues C139–C159 and C176–C198. The interval H205 to M280 is interaction with FAM120B. The NR LBD domain maps to D238–D503. A Glycyl lysine isopeptide (Lys-Gly) (interchain with G-Cter in ubiquitin) cross-link involves residue K252. Rosiglitazone is bound by residues Q314–S317, H351, H477, and Y501. The short motif at P495–D503 is the 9aaTAD element.

The protein belongs to the nuclear hormone receptor family. NR1 subfamily. In terms of assembly, interacts with FOXO1 (acetylated form). Heterodimer with other nuclear receptors, such as RXRA. The heterodimer with the retinoic acid receptor RXRA is called adipocyte-specific transcription factor ARF6. Interacts with NCOA6 coactivator, leading to a strong increase in transcription of target genes. Interacts with coactivator PPARBP, leading to a mild increase in transcription of target genes. Interacts with NOCA7 in a ligand-inducible manner. Interacts with NCOA1 and NCOA2 LXXLL motifs. Interacts with ASXL1, ASXL2, DNTTIP2, FAM120B, MAP2K1/MEK1, NR0B2, PDPK1, PRDM16, PRMT2 and TGFB1I1. Interacts (when activated by agonist) with PPP5C. Interacts with HELZ2 and THRAP3; the interaction stimulates the transcriptional activity of PPARG. Interacts with PER2, the interaction is ligand dependent and blocks PPARG recruitment to target promoters. Interacts with NOCT. Interacts with ACTN4. Interacts (when in the liganded conformation) with GPS2. Interacts with CRY1 and CRY2 in a ligand-dependent manner. In the absence of hormonal ligand, interacts with TACC1. In macrophages, interacts with PAQR3 and STUB1; the interactions promote PPARG poylubiquitination and STUB1-mediated degradation. In terms of processing, O-GlcNAcylation at Thr-84 reduces transcriptional activity in adipocytes. Phosphorylated in basal conditions and dephosphorylated when treated with the ligand. May be dephosphorylated by PPP5C. The phosphorylated form may be inactive and dephosphorylation at Ser-112 induces adipogenic activity. Post-translationally, ubiquitinated by E3 ubiquitin-protein ligase complex containing FBXO9; leading to proteasomal degradation. Ubiquitinated at Lys-252 by TRIM55 leading to proteasomal degradation. Ubiquitinated by E3 ubiquitin-protein ligase STUB1/CHIP; leading to proteasomal degradation. In terms of tissue distribution, highest expression in adipose tissue. Lower in skeletal muscle, spleen, heart and liver. Also detectable in placenta, lung and ovary.

Its subcellular location is the nucleus. The protein localises to the cytoplasm. Its activity is regulated as follows. PDPK1 activates its transcriptional activity independently of its kinase activity. In terms of biological role, nuclear receptor that binds peroxisome proliferators such as hypolipidemic drugs and fatty acids. Once activated by a ligand, the nuclear receptor binds to DNA specific PPAR response elements (PPRE) and modulates the transcription of its target genes, such as acyl-CoA oxidase. It therefore controls the peroxisomal beta-oxidation pathway of fatty acids. Key regulator of adipocyte differentiation and glucose homeostasis. ARF6 acts as a key regulator of the tissue-specific adipocyte P2 (aP2) enhancer. Acts as a critical regulator of gut homeostasis by suppressing NF-kappa-B-mediated pro-inflammatory responses. Plays a role in the regulation of cardiovascular circadian rhythms by regulating the transcription of BMAL1 in the blood vessels. Functionally, (Microbial infection) Upon treatment with M.tuberculosis or its lipoprotein LpqH, phosphorylation of MAPK p38 and IL-6 production are modulated, probably via this protein. This chain is Peroxisome proliferator-activated receptor gamma (PPARG), found in Homo sapiens (Human).